Here is a 260-residue protein sequence, read N- to C-terminus: Global transcriptional regulator CodY (260 aa).

Residues 1-159 form a GAF domain region; the sequence is MPNLLEKTRK…SSTVVGIQLL (159 aa). The segment at residues 207 to 226 is a DNA-binding region (H-T-H motif); the sequence is ASVIADRIGITRSVIVNALR.

The protein belongs to the CodY family.

It is found in the cytoplasm. DNA-binding global transcriptional regulator which is involved in the adaptive response to starvation and acts by directly or indirectly controlling the expression of numerous genes in response to nutrient availability. During rapid exponential growth, CodY is highly active and represses genes whose products allow adaptation to nutrient depletion. This is Global transcriptional regulator CodY from Streptococcus pyogenes serotype M3 (strain SSI-1).